Reading from the N-terminus, the 317-residue chain is Beta-ketoacyl-[acyl-carrier-protein] synthase III (317 aa).

Residues Cys-112 and His-244 contribute to the active site. The segment at 245-249 (QANLR) is ACP-binding. Residue Asn-274 is part of the active site.

It belongs to the thiolase-like superfamily. FabH family. Homodimer.

It localises to the cytoplasm. The catalysed reaction is malonyl-[ACP] + acetyl-CoA + H(+) = 3-oxobutanoyl-[ACP] + CO2 + CoA. The protein operates within lipid metabolism; fatty acid biosynthesis. Catalyzes the condensation reaction of fatty acid synthesis by the addition to an acyl acceptor of two carbons from malonyl-ACP. Catalyzes the first condensation reaction which initiates fatty acid synthesis and may therefore play a role in governing the total rate of fatty acid production. Possesses both acetoacetyl-ACP synthase and acetyl transacylase activities. Its substrate specificity determines the biosynthesis of branched-chain and/or straight-chain of fatty acids. In Baumannia cicadellinicola subsp. Homalodisca coagulata, this protein is Beta-ketoacyl-[acyl-carrier-protein] synthase III.